Reading from the N-terminus, the 261-residue chain is Imidazole glycerol phosphate synthase subunit HisF (261 aa).

Residues Asp-16 and Asp-135 contribute to the active site.

This sequence belongs to the HisA/HisF family. Heterodimer of HisH and HisF.

It is found in the cytoplasm. The enzyme catalyses 5-[(5-phospho-1-deoxy-D-ribulos-1-ylimino)methylamino]-1-(5-phospho-beta-D-ribosyl)imidazole-4-carboxamide + L-glutamine = D-erythro-1-(imidazol-4-yl)glycerol 3-phosphate + 5-amino-1-(5-phospho-beta-D-ribosyl)imidazole-4-carboxamide + L-glutamate + H(+). It participates in amino-acid biosynthesis; L-histidine biosynthesis; L-histidine from 5-phospho-alpha-D-ribose 1-diphosphate: step 5/9. Functionally, IGPS catalyzes the conversion of PRFAR and glutamine to IGP, AICAR and glutamate. The HisF subunit catalyzes the cyclization activity that produces IGP and AICAR from PRFAR using the ammonia provided by the HisH subunit. This Mycolicibacterium gilvum (strain PYR-GCK) (Mycobacterium gilvum (strain PYR-GCK)) protein is Imidazole glycerol phosphate synthase subunit HisF.